Consider the following 306-residue polypeptide: Dermonecrotic toxin LiSicTox-alphaIA2ai (306 aa).

A signal peptide spans 1–18; the sequence is MLPYIALILVCWSVLSQA. A propeptide spanning residues 19–26 is cleaved from the precursor; it reads AQTDVEGR. Histidine 38 is a catalytic residue. Residues glutamate 58 and aspartate 60 each coordinate Mg(2+). Histidine 74 (nucleophile) is an active-site residue. Intrachain disulfides connect cysteine 78–cysteine 84 and cysteine 80–cysteine 223. Aspartate 118 contacts Mg(2+). N-linked (GlcNAc...) asparagine glycosylation occurs at asparagine 283.

It belongs to the arthropod phospholipase D family. Class II subfamily. Class IIa sub-subfamily. Mg(2+) serves as cofactor. As to expression, expressed by the venom gland.

The protein localises to the secreted. The enzyme catalyses an N-(acyl)-sphingosylphosphocholine = an N-(acyl)-sphingosyl-1,3-cyclic phosphate + choline. It catalyses the reaction an N-(acyl)-sphingosylphosphoethanolamine = an N-(acyl)-sphingosyl-1,3-cyclic phosphate + ethanolamine. It carries out the reaction a 1-acyl-sn-glycero-3-phosphocholine = a 1-acyl-sn-glycero-2,3-cyclic phosphate + choline. The catalysed reaction is a 1-acyl-sn-glycero-3-phosphoethanolamine = a 1-acyl-sn-glycero-2,3-cyclic phosphate + ethanolamine. Its function is as follows. Dermonecrotic toxins cleave the phosphodiester linkage between the phosphate and headgroup of certain phospholipids (sphingolipid and lysolipid substrates), forming an alcohol (often choline) and a cyclic phosphate. This toxin acts on sphingomyelin (SM). It may also act on ceramide phosphoethanolamine (CPE), lysophosphatidylcholine (LPC) and lysophosphatidylethanolamine (LPE), but not on lysophosphatidylserine (LPS), and lysophosphatidylglycerol (LPG). It acts by transphosphatidylation, releasing exclusively cyclic phosphate products as second products. It induces complement-dependent hemolysis, dermonecrosis, vascular permeability and platelet aggregation. In Loxosceles intermedia (Brown spider), this protein is Dermonecrotic toxin LiSicTox-alphaIA2ai.